The chain runs to 178 residues: Glucagon-2 (178 aa).

Positions 1–21 (MFGIHSLAGVLLLVIVQSQLA) are cleaved as a signal peptide. Propeptides lie at residues 83–87 (SGAPS), 123–134 (ESAEESMNGPMS), and 171–178 (SNKRQEDH).

It belongs to the glucagon family.

It localises to the secreted. Promotes hydrolysis of glycogen and lipids, and raises the blood sugar level. The chain is Glucagon-2 (gcg2) from Oncorhynchus mykiss (Rainbow trout).